The sequence spans 215 residues: Small ribosomal subunit protein uS7 (215 aa).

It belongs to the universal ribosomal protein uS7 family. Part of the 30S ribosomal subunit.

One of the primary rRNA binding proteins, it binds directly to 16S rRNA where it nucleates assembly of the head domain of the 30S subunit. Is located at the subunit interface close to the decoding center. The polypeptide is Small ribosomal subunit protein uS7 (Pyrococcus abyssi (strain GE5 / Orsay)).